The primary structure comprises 30 residues: Dendrotoxin B (30 aa).

Cysteines 3 and 22 form a disulfide.

It belongs to the three-finger toxin family. Short-chain subfamily. Orphan group XI sub-subfamily. Post-translationally, contains 4 disulfide bonds. In terms of tissue distribution, expressed by the venom gland.

Its subcellular location is the secreted. Its function is as follows. Blocks voltage-gated potassium channels (Kv). This is the slowly inactivating phase of potassium efflux which is blocked by this toxin. The sequence is that of Dendrotoxin B from Dendroaspis angusticeps (Eastern green mamba).